The following is a 276-amino-acid chain: NAD-capped RNA hydrolase NudC (276 aa).

R82 provides a ligand contact to substrate. Zn(2+)-binding residues include C112 and C115. A substrate-binding site is contributed by E125. Positions 130 and 133 each coordinate Zn(2+). Y138 is a binding site for substrate. One can recognise a Nudix hydrolase domain in the interval 139-262 (PRLSPSMIVL…SIARYLIELY (124 aa)). Positions 172, 188, and 192 each coordinate a divalent metal cation. A Nudix box motif is present at residues 173 to 194 (GYVEPGESVEQCVAREVREEVG). 206–213 (QGWPFPHS) serves as a coordination point for substrate. An a divalent metal cation-binding site is contributed by E233. Position 255 (A255) interacts with substrate.

The protein belongs to the Nudix hydrolase family. NudC subfamily. As to quaternary structure, homodimer. Mg(2+) serves as cofactor. Requires Mn(2+) as cofactor. It depends on Zn(2+) as a cofactor.

The catalysed reaction is a 5'-end NAD(+)-phospho-ribonucleoside in mRNA + H2O = a 5'-end phospho-adenosine-phospho-ribonucleoside in mRNA + beta-nicotinamide D-ribonucleotide + 2 H(+). The enzyme catalyses NAD(+) + H2O = beta-nicotinamide D-ribonucleotide + AMP + 2 H(+). It catalyses the reaction NADH + H2O = reduced beta-nicotinamide D-ribonucleotide + AMP + 2 H(+). Functionally, mRNA decapping enzyme that specifically removes the nicotinamide adenine dinucleotide (NAD) cap from a subset of mRNAs by hydrolyzing the diphosphate linkage to produce nicotinamide mononucleotide (NMN) and 5' monophosphate mRNA. The NAD-cap is present at the 5'-end of some mRNAs and stabilizes RNA against 5'-processing. Has preference for mRNAs with a 5'-end purine. Catalyzes the hydrolysis of a broad range of dinucleotide pyrophosphates. The sequence is that of NAD-capped RNA hydrolase NudC from Stutzerimonas stutzeri (strain A1501) (Pseudomonas stutzeri).